The primary structure comprises 78 residues: Large ribosomal subunit protein uL30 (78 aa).

The span at 58–68 (DDTSPDAETGA) shows a compositional bias: acidic residues. Residues 58 to 78 (DDTSPDAETGADLERDGGNRS) are disordered. Basic and acidic residues predominate over residues 69–78 (DLERDGGNRS).

The protein belongs to the universal ribosomal protein uL30 family. Part of the 50S ribosomal subunit.

In Roseiflexus sp. (strain RS-1), this protein is Large ribosomal subunit protein uL30.